Consider the following 282-residue polypeptide: Orotidine 5'-phosphate decarboxylase (282 aa).

Residue Lys-95 is the Proton donor of the active site.

It belongs to the OMP decarboxylase family. Type 2 subfamily.

The catalysed reaction is orotidine 5'-phosphate + H(+) = UMP + CO2. It participates in pyrimidine metabolism; UMP biosynthesis via de novo pathway; UMP from orotate: step 2/2. In Polaromonas naphthalenivorans (strain CJ2), this protein is Orotidine 5'-phosphate decarboxylase.